A 480-amino-acid chain; its full sequence is tRNA (guanine(37)-N(1))-methyltransferase (480 aa).

Residues 1–18 constitute a mitochondrion transit peptide; that stretch reads MAAVWRRSARLFILLQRH. Residues His273, 311 to 312, 339 to 340, and Asn367 each bind S-adenosyl-L-methionine; these read DL and DG. Residues 458 to 480 are disordered; that stretch reads HTQDRDTSEEPCPKKQKCEDSTN.

The protein belongs to the class I-like SAM-binding methyltransferase superfamily. TRM5/TYW2 family. As to quaternary structure, monomer.

Its subcellular location is the mitochondrion matrix. The protein localises to the nucleus. The protein resides in the cytoplasm. It catalyses the reaction guanosine(37) in tRNA + S-adenosyl-L-methionine = N(1)-methylguanosine(37) in tRNA + S-adenosyl-L-homocysteine + H(+). Its function is as follows. Involved in mitochondrial tRNA methylation. Specifically methylates the N1 position of guanosine-37 in various tRNAs. Methylation is not dependent on the nature of the nucleoside 5' of the target nucleoside. This is the first step in the biosynthesis of wybutosine (yW), a modified base adjacent to the anticodon of tRNAs and required for accurate decoding. The protein is tRNA (guanine(37)-N(1))-methyltransferase (trmt5) of Danio rerio (Zebrafish).